Reading from the N-terminus, the 509-residue chain is Probable cytochrome P450 4ac1 (509 aa).

Residues Glu317 and Cys454 each contribute to the heme site.

This sequence belongs to the cytochrome P450 family. Heme serves as cofactor.

Its subcellular location is the endoplasmic reticulum membrane. It is found in the microsome membrane. Functionally, may be involved in the metabolism of insect hormones and in the breakdown of synthetic insecticides. The sequence is that of Probable cytochrome P450 4ac1 (Cyp4ac1) from Drosophila melanogaster (Fruit fly).